The chain runs to 501 residues: Pentatricopeptide repeat-containing protein At4g16470 (501 aa).

PPR repeat units follow at residues 107–141 (EPET…GFAL), 142–172 (NEYL…LKIR), 173–207 (DLIP…RIVP), 208–242 (DQYT…CIKS), 243–273 (NIIV…LSTR), 274–308 (NVIT…GCRP), 309–344 (NPVT…GIEP), and 345–379 (EGQH…EHPP). Positions 380-455 (VWGSLLGACR…DPGYSQIELQ (76 aa)) are type E motif. Residues 456-486 (GEVHRFMKDDTSHRLSEKIYKKVHEMTSFFM) are type E(+) motif.

It belongs to the PPR family. PCMP-E subfamily.

This Arabidopsis thaliana (Mouse-ear cress) protein is Pentatricopeptide repeat-containing protein At4g16470 (PCMP-E12).